Reading from the N-terminus, the 297-residue chain is Mitochondrial substrate carrier family protein P (297 aa).

Solcar repeat units lie at residues 12 to 98 (KPSW…IKNH), 104 to 189 (SSSF…LKRI), and 201 to 293 (ISGT…LSNF). Transmembrane regions (helical) follow at residues 15–35 (WVSF…VAPL), 66–86 (GIKG…PYAA), 107–127 (FQIF…TYPL), 165–185 (IQPT…TFEF), 207–227 (LIAG…FDVV), and 262–282 (ILAL…TASI).

This sequence belongs to the mitochondrial carrier (TC 2.A.29) family.

It localises to the mitochondrion inner membrane. Its function is as follows. Mitochondrial solute carriers shuttle metabolites, nucleotides, and cofactors through the mitochondrial inner membrane. Required for the accumulation of coenzyme A in the mitochondrial matrix. This is Mitochondrial substrate carrier family protein P (mcfP) from Dictyostelium discoideum (Social amoeba).